The sequence spans 254 residues: tRNA (guanine-N(1)-)-methyltransferase (254 aa).

S-adenosyl-L-methionine-binding positions include Gly-117 and 136–141 (LGDFVL).

Belongs to the RNA methyltransferase TrmD family. Homodimer.

Its subcellular location is the cytoplasm. It catalyses the reaction guanosine(37) in tRNA + S-adenosyl-L-methionine = N(1)-methylguanosine(37) in tRNA + S-adenosyl-L-homocysteine + H(+). Functionally, specifically methylates guanosine-37 in various tRNAs. The protein is tRNA (guanine-N(1)-)-methyltransferase of Levilactobacillus brevis (strain ATCC 367 / BCRC 12310 / CIP 105137 / JCM 1170 / LMG 11437 / NCIMB 947 / NCTC 947) (Lactobacillus brevis).